A 365-amino-acid polypeptide reads, in one-letter code: Peptide chain release factor 2 (365 aa).

An N5-methylglutamine modification is found at Gln252.

Belongs to the prokaryotic/mitochondrial release factor family. Methylated by PrmC. Methylation increases the termination efficiency of RF2.

It localises to the cytoplasm. Its function is as follows. Peptide chain release factor 2 directs the termination of translation in response to the peptide chain termination codons UGA and UAA. This chain is Peptide chain release factor 2, found in Shewanella baltica (strain OS223).